Here is a 72-residue protein sequence, read N- to C-terminus: ADVSYGINKDCLLPMDVGRCRAKFPRYYYNSSSRRCEKFNYGGCRGNANNFHTLEECEKVCGVRSRDSPKEN.

Positions 1–6 (ADVSYG) are cleaved as a signal peptide. The BPTI/Kunitz inhibitor domain maps to 11 to 61 (CLLPMDVGRCRAKFPRYYYNSSSRRCEKFNYGGCRGNANNFHTLEECEKVC). 3 disulfides stabilise this stretch: Cys-11–Cys-61, Cys-20–Cys-44, and Cys-36–Cys-57. Positions 66–72 (RDSPKEN) are excised as a propeptide.

It belongs to the venom Kunitz-type family. Sea anemone type 2 potassium channel toxin subfamily.

It localises to the secreted. The protein resides in the nematocyst. In terms of biological role, serine protease inhibitor that inhibits both tissue and plasma kallikreins. Has hemolytic activity. Inhibits voltage-gated potassium channels (Kv). The polypeptide is U-actitoxin-Avd3r (Anemonia viridis (Snakelocks anemone)).